The following is a 167-amino-acid chain: uncharacterized protein (167 aa).

The segment at methionine 1–cysteine 21 is disordered.

This is an uncharacterized protein from Homo sapiens (Human).